The chain runs to 512 residues: Chitin synthase regulatory factor 2 (512 aa).

Sel1-like repeat units lie at residues 224 to 260 (SEAL…DLNH), 261 to 296 (VQAA…SGQH), 297 to 333 (VGAM…LEAD), 337 to 377 (PQAL…KYGL), 378 to 414 (KDAQ…RKRN), and 415 to 452 (PEAM…YKNH). At C509 the chain carries Cysteine methyl ester. Residue C509 is the site of S-farnesyl cysteine attachment. A propeptide spans 510–512 (IIS) (removed in mature form).

The protein localises to the membrane. Involved in chitin biosynthesis. The chain is Chitin synthase regulatory factor 2 (chr2) from Schizosaccharomyces pombe (strain 972 / ATCC 24843) (Fission yeast).